The following is a 332-amino-acid chain: MKTLGEFIVEKQHEFSHATGELTALLSAIKLGAKIIHRDINKAGLVDILGASGAENVQGEVQQKLDLFANEKLKAALRARDIVAGIASEEEDEIVVFEGCEHAKYVVLMDPLDGSSNIDVNVSVGTIFSIYRRVTPVGTPVTEEDFLQPGNRQVAAGYVVYGSSTMLVYTTGCGVHAFTYDPSLGVFCLCQERMRFPEKGNTYSINEGNYIKFPQGVKKYIKYCQEEDKETQRPYTSRYIGSLVADFHRNLLKGGIYLYPSTASHPDGKLRLLYECNPMAFLAEQAGGKASDGKERILDIIPESLHQRRSFFVGNNHMVEDVENFIKAFPDA.

Mg(2+) contacts are provided by E89, D110, L112, and D113. Residues 113 to 116, N206, Y239, 257 to 259, and K269 each bind substrate; these read DGSS and YLY. E275 is a Mg(2+) binding site.

It belongs to the FBPase class 1 family. Homotetramer. Requires Mg(2+) as cofactor.

The protein resides in the cytoplasm. It carries out the reaction beta-D-fructose 1,6-bisphosphate + H2O = beta-D-fructose 6-phosphate + phosphate. Its pathway is carbohydrate biosynthesis; gluconeogenesis. The polypeptide is Fructose-1,6-bisphosphatase class 1 (Klebsiella pneumoniae (strain 342)).